The following is a 212-amino-acid chain: MAIGLIGRKVGMTRIFTEDGVSIPVTVIEATPNRVTQLRTDETDGYTALQVTAGDKKANRVNKAAAGHFAKAGVEAGRGLWEFRLDGNEGEGIEVGSEITVEIFAETKMVDVAGTSKGKGFQGAIKRWNFSHQRNSHGNSLSHRAPGSIGQNQSPGKVFKGKKMAGQMGNKRVTVQSLDVVRVDAENNLLLVRGNVPGAPGGDVIIKAAVKA.

Positions 134–155 are disordered; it reads RNSHGNSLSHRAPGSIGQNQSP. At glutamine 153 the chain carries N5-methylglutamine.

This sequence belongs to the universal ribosomal protein uL3 family. As to quaternary structure, part of the 50S ribosomal subunit. Forms a cluster with proteins L14 and L19. Post-translationally, methylated by PrmB.

In terms of biological role, one of the primary rRNA binding proteins, it binds directly near the 3'-end of the 23S rRNA, where it nucleates assembly of the 50S subunit. The sequence is that of Large ribosomal subunit protein uL3 from Pseudoalteromonas atlantica (strain T6c / ATCC BAA-1087).